The following is a 247-amino-acid chain: UPF0659 protein C216.03 (247 aa).

This sequence belongs to the UPF0659 family.

The protein resides in the cytoplasm. It is found in the nucleus. This chain is UPF0659 protein C216.03, found in Schizosaccharomyces pombe (strain 972 / ATCC 24843) (Fission yeast).